The chain runs to 1342 residues: MKRIFSLLEKTWLGAPIQFAWQKTSGNYLAVTGADYIVKIFDRHGQKRSEINLPGNCVAMDWDKDGDVLAVIAEKSSCIYLWDANTNKTSQLDNGMRDQMSFLLWSKVGSFLAVGTVKGNLLIYNHQTSRKIPVLGKHTKRITCGCWNAENLLALGGEDKMITVSNQEGDTIRQTQVRSEPSNMQFFLMKMDDRTSAAESMISVVLGKKTLFFLNLNEPDNPADLEFQQDFGNIVCYNWYGDGRIMIGFSCGHFVVISTHTGELGQEIFQARNHKDNLTSIAVSQTLNKVATCGDNCIKIQDLVDLKDMYVILNLDEENKGLGTLSWTDDGQLLALSTQRGSLHVFLTKLPILGDACSTRIAYLTSLLEVTVANPVEGELPITVSVDVEPNFVAVGLYHLAVGMNNRAWFYVLGENAVKKLKDMEYLGTVASICLHSDYAAALFEGKVQLHLIESEILDAQEERETRLFPAVDDKCRILCHALTSDFLIYGTDTGVVQYFYIEDWQFVNDYRHPVSVKKIFPDPNGTRLVFIDEKSDGFVYCPVNDATYEIPDFSPTIKGVLWENWPMDKGVFIAYDDDKVYTYVFHKDTIQGAKVILAGSTKVPFAHKPLLLYNGELTCQTQSGKVNNIYLSTHGFLSNLKDTGPDELRPMLAQNLMLKRFSDAWEMCRILNDEAAWNELARACLHHMEVEFAIRVYRRIGNVGIVMSLEQIKGIEDYNLLAGHLAMFTNDYNLAQDLYLASSCPIAALEMRRDLQHWDSALQLAKHLAPDQIPFISKEYAIQLEFAGDYVNALAHYEKGITGDNKEHDEACLAGVAQMSIRMGDIRRGVNQALKHPSRVLKRDCGAILENMKQFSEAAQLYEKGLYYDKAASVYIRSKNWAKVGDLLPHVSSPKIHLQYAKAKEADGRYKEAVVAYENAKQWQSVIRIYLDHLNNPEKAVNIVRETQSLDGAKMVARFFLQLGDYGSAIQFLVMSKCNNEAFTLAQQHNKMEIYADIIGSEDTTNEDYQSIALYFEGEKRYLQAGKFFLLCGQYSRALKHFLKCPSSEDNVAIEMAIETVGQAKDELLTNQLIDHLLGENDGMPKDAKYLFRLYMALKQYREAAQTAIIIAREEQSAGNYRNAHDVLFSMYAELKSQKIKIPSEMATNLMILHSYILVKIHVKNGDHMKGARMLIRVANNISKFPSHIVPILTSTVIECHRAGLKNSAFSFAAMLMRPEYRSKIDAKYKKKIEGMVRRPDISEIEEATTPCPFCKFLLPECELLCPGCKNSIPYCIATGRHMLKDDWTVCPHCDFPALYSELKIMLNTESTCPMCSERLNAAQLKKISDCTQYLRTEEEL.

WD repeat units lie at residues 11–51, 52–92, 95–134, 137–175, 273–311, and 317–356; these read TWLG…RSEI, NLPG…TSQL, GMRD…KIPV, KHTK…IRQT, NHKD…DMYV, and EENK…LGDA. 6 TPR repeats span residues 736–769, 775–808, 840–873, 895–928, 951–984, and 1020–1053; these read AQDL…AKHL, PFIS…DNKE, RVLK…DKAA, PKIH…QSVI, LDGA…NEAF, and EKRY…EDNV.

In terms of assembly, component of the IFT complex A (IFT-A) complex. IFT-A complex is divided into a core subcomplex composed of IFT122:IFT140:WDR19 which is associated with TULP3 and a peripheral subcomplex composed of IFT43:WDR35:TTC21B. Interacts (via C-terminal region) with IFT122 (via C-terminal region). Interacts with BBS1. Interacts with TTC25. Some isoforms are tissue-specific. Highly expressed in the prostate. Lower expression in the cerebellum, pituitary gland, fetal lung, and pancreas. In normal prostate, expressed in both basal and luminal epithelial cells. No expression detected in fibromuscular stromal cells, endothelial cells, or infiltrating lymphocytes. Uniformed expression in prostate adenocarcinoma cells.

It localises to the cell projection. The protein localises to the cilium. It is found in the cytoplasm. The protein resides in the cytoskeleton. Its subcellular location is the cilium basal body. It localises to the photoreceptor outer segment. The protein localises to the flagellum. As component of the IFT complex A (IFT-A), a complex required for retrograde ciliary transport and entry into cilia of G protein-coupled receptors (GPCRs), it is involved in cilia function and/or assembly. Essential for functional IFT-A assembly and ciliary entry of GPCRs. Associates with the BBSome complex to mediate ciliary transport. In Homo sapiens (Human), this protein is WD repeat-containing protein 19.